The sequence spans 291 residues: HTH-type transcriptional regulator CitR (291 aa).

The HTH lysR-type domain occupies 1 to 58 (MDFKWLHTFVTAAKYENFRKTAETLFLSQPTVTVHIKQLEKEISCKLFERKGRQIQLT). Residues 18–37 (FRKTAETLFLSQPTVTVHIK) constitute a DNA-binding region (H-T-H motif).

The protein belongs to the LysR transcriptional regulatory family.

The protein resides in the cytoplasm. Its function is as follows. Negative regulatory protein for the citA gene for citrate synthase I. The sequence is that of HTH-type transcriptional regulator CitR (citR) from Bacillus subtilis (strain 168).